The primary structure comprises 181 residues: Translation initiation factor IF-3 (181 aa).

It belongs to the IF-3 family. In terms of assembly, monomer.

The protein localises to the cytoplasm. Functionally, IF-3 binds to the 30S ribosomal subunit and shifts the equilibrium between 70S ribosomes and their 50S and 30S subunits in favor of the free subunits, thus enhancing the availability of 30S subunits on which protein synthesis initiation begins. In Mycoplasma capricolum subsp. capricolum (strain California kid / ATCC 27343 / NCTC 10154), this protein is Translation initiation factor IF-3.